We begin with the raw amino-acid sequence, 332 residues long: Probable ABC transporter permease protein YphD (332 aa).

10 helical membrane passes run 28 to 48, 63 to 83, 84 to 104, 105 to 125, 131 to 151, 172 to 192, 222 to 242, 251 to 271, 278 to 298, and 303 to 323; these read GLLV…PGFI, IGIA…DVSV, GPMV…EVPL, AVAC…AGVL, VPSF…GLFM, FLGV…FVFI, VRIL…ILLA, GAAN…GTAL, LFGT…LVLL, and FFQQ…NILL.

It belongs to the binding-protein-dependent transport system permease family. AraH/RbsC subfamily.

The protein resides in the cell inner membrane. Probably part of the binding-protein-dependent transport system YphDEF. Probably responsible for the translocation of the substrate across the membrane. The polypeptide is Probable ABC transporter permease protein YphD (yphD) (Escherichia coli (strain K12)).